The chain runs to 439 residues: Dihydroorotate dehydrogenase (quinone), mitochondrial (439 aa).

Residues 1-22 constitute a mitochondrion transit peptide; sequence MMHRVGFNVIGRRSFFTVNARR. Residues 37–53 traverse the membrane as a helical segment; sequence LTALLLAGSAGYLYFMN. Residues 119–123 and S143 contribute to the FMN site; that span reads AGLDK. K123 serves as a coordination point for substrate. Position 168-172 (168-172) interacts with substrate; it reads NRYGF. Positions 215 and 245 each coordinate FMN. 245–250 is a binding site for substrate; it reads NVSSPN. S248 serves as the catalytic Nucleophile. 2 residues coordinate FMN: K296 and S324. Position 325–326 (325–326) interacts with substrate; it reads NT. FMN-binding positions include G350, G380, and 401–402; that span reads YT.

This sequence belongs to the dihydroorotate dehydrogenase family. Type 2 subfamily. The cofactor is FMN.

It localises to the mitochondrion inner membrane. It carries out the reaction (S)-dihydroorotate + a quinone = orotate + a quinol. The protein operates within pyrimidine metabolism; UMP biosynthesis via de novo pathway; orotate from (S)-dihydroorotate (quinone route): step 1/1. Catalyzes the conversion of dihydroorotate to orotate with quinone as electron acceptor. This chain is Dihydroorotate dehydrogenase (quinone), mitochondrial (URA9), found in Candida glabrata (strain ATCC 2001 / BCRC 20586 / JCM 3761 / NBRC 0622 / NRRL Y-65 / CBS 138) (Yeast).